A 338-amino-acid chain; its full sequence is DNA-directed RNA polymerase subunit alpha (338 aa).

The tract at residues 1–230 (MRKITTSAYM…QQMSVFKGIL (230 aa)) is alpha N-terminal domain (alpha-NTD). Positions 247-338 (FSKLLSSVED…ELKSQMSAKE (92 aa)) are alpha C-terminal domain (alpha-CTD).

The protein belongs to the RNA polymerase alpha chain family. In terms of assembly, homodimer. The RNAP catalytic core consists of 2 alpha, 1 beta, 1 beta' and 1 omega subunit. When a sigma factor is associated with the core the holoenzyme is formed, which can initiate transcription.

It catalyses the reaction RNA(n) + a ribonucleoside 5'-triphosphate = RNA(n+1) + diphosphate. Functionally, DNA-dependent RNA polymerase catalyzes the transcription of DNA into RNA using the four ribonucleoside triphosphates as substrates. This Campylobacter concisus (strain 13826) protein is DNA-directed RNA polymerase subunit alpha.